Reading from the N-terminus, the 1173-residue chain is Eukaryotic translation initiation factor 3 subunit A (1173 aa).

Residues 319 to 502 (LQRMAAHVLL…NSIYFGTDLT (184 aa)) form the PCI domain. Disordered stretches follow at residues 589–613 (QNNAREEEEARRQEEESRKAKLAEQ) and 836–1173 (AAEA…PVQL). 4 stretches are compositionally biased toward basic and acidic residues: residues 836–900 (AAEA…RGGD), 925–1011 (DRNE…EPDS), 1028–1081 (SRDD…DAAP), and 1090–1125 (DAPRQSDRDNRRPAGDRRDREVRGGDLRGPESRAPK). A compositionally biased stretch (gly residues) spans 1128–1142 (GPSGGTGTAAGGGGN). Residues 1149-1165 (PRDEPAPKRDQPQDKGK) show a composition bias toward basic and acidic residues.

Belongs to the eIF-3 subunit A family. As to quaternary structure, component of the eukaryotic translation initiation factor 3 (eIF-3) complex. The eIF-3 complex interacts with pix.

The protein resides in the cytoplasm. Functionally, RNA-binding component of the eukaryotic translation initiation factor 3 (eIF-3) complex, which is involved in protein synthesis of a specialized repertoire of mRNAs and, together with other initiation factors, stimulates binding of mRNA and methionyl-tRNAi to the 40S ribosome. The eIF-3 complex specifically targets and initiates translation of a subset of mRNAs involved in cell proliferation. This chain is Eukaryotic translation initiation factor 3 subunit A, found in Drosophila persimilis (Fruit fly).